The chain runs to 65 residues: MPKMKTKSAAAKRFKRTAKGGFKSGNSFTSHRFHGKTKKQRRQLRGLSMMDKSNVKRYKKMIPAK.

Basic residues-rich tracts occupy residues 1–18 (MPKM…KRTA), 31–44 (HRFH…RRQL), and 55–65 (VKRYKKMIPAK). Residues 1–65 (MPKMKTKSAA…KRYKKMIPAK (65 aa)) form a disordered region.

The protein belongs to the bacterial ribosomal protein bL35 family.

This chain is Large ribosomal subunit protein bL35, found in Limosilactobacillus fermentum (strain NBRC 3956 / LMG 18251) (Lactobacillus fermentum).